Reading from the N-terminus, the 119-residue chain is NADH-quinone oxidoreductase subunit A (119 aa).

The next 3 helical transmembrane spans lie at 7–27 (FPVL…MTIG), 63–83 (LIAI…PWGV), and 88–108 (IGWP…VGFV).

Belongs to the complex I subunit 3 family. In terms of assembly, NDH-1 is composed of 14 different subunits. Subunits NuoA, H, J, K, L, M, N constitute the membrane sector of the complex.

Its subcellular location is the cell inner membrane. It carries out the reaction a quinone + NADH + 5 H(+)(in) = a quinol + NAD(+) + 4 H(+)(out). Functionally, NDH-1 shuttles electrons from NADH, via FMN and iron-sulfur (Fe-S) centers, to quinones in the respiratory chain. The immediate electron acceptor for the enzyme in this species is believed to be ubiquinone. Couples the redox reaction to proton translocation (for every two electrons transferred, four hydrogen ions are translocated across the cytoplasmic membrane), and thus conserves the redox energy in a proton gradient. The polypeptide is NADH-quinone oxidoreductase subunit A (Ralstonia nicotianae (strain ATCC BAA-1114 / GMI1000) (Ralstonia solanacearum)).